Reading from the N-terminus, the 481-residue chain is RAC-beta serine/threonine-protein kinase (481 aa).

The residue at position 1 (Met-1) is an N-acetylmethionine. The 104-residue stretch at 5–108 folds into the PH domain; sequence SVIKEGWLHK…WIRAIQMVAN (104 aa). Residue Ser-34 is modified to Phosphoserine. A disulfide bond links Cys-60 and Cys-77. Ser-126 is modified (phosphoserine). Ser-128 and Ser-131 each carry an O-linked (GlcNAc) serine glycan. A Protein kinase domain is found at 152–409; sequence FDYLKLLGKG…AKEVMEHRFF (258 aa). Residues 158 to 166 and Lys-181 each bind ATP; that span reads LGKGTFGKV. Catalysis depends on Asp-275, which acts as the Proton acceptor. 2 residues coordinate Mn(2+): Asn-280 and Asp-293. A glycan (O-linked (GlcNAc) threonine) is linked at Thr-306. At Thr-309 the chain carries Phosphothreonine; by PDPK1. O-linked (GlcNAc) threonine glycosylation is present at Thr-313. In terms of domain architecture, AGC-kinase C-terminal spans 410–481; that stretch reads LSINWQDVVQ…QFSYSASIRE (72 aa). Ser-447 carries the phosphoserine modification. Position 451 is a phosphothreonine (Thr-451). Phosphoserine is present on residues Ser-461, Ser-474, and Ser-478. An O-linked (GlcNAc) serine; alternate glycan is attached at Ser-474.

The protein belongs to the protein kinase superfamily. AGC Ser/Thr protein kinase family. RAC subfamily. Interacts with BTBD10. Interacts with KCTD20. Interacts (via PH domain) with MTCP1, TCL1A and TCL1B; this interaction may facilitate AKT2 oligomerization and phosphorylation, hence increasing kinase activity. Interacts with PHB2; this interaction may be important for myogenic differentiation. Interacts (when phosphorylated) with CLIP3; this interaction promotes cell membrane localization. Interacts with WDFY2 (via WD repeats 1-3). In terms of processing, phosphorylation on Thr-309 and Ser-474 is required for full activity. Phosphorylation of the activation loop at Thr-309 by PDPK1/PDK1 is a prerequisite for full activation. Phosphorylated and activated by PDPK1/PDK1 in the presence of phosphatidylinositol 3,4,5-trisphosphate. Phosphorylation by mTORC2 in response to growth factors plays a key role in AKT1 activation: mTORC2 phosphorylates different sites depending on the context, such as Ser-474 or Ser-478, thereby facilitating subsequent phosphorylation of the activation loop by PDPK1/PDK1. Post-translationally, ubiquitinated; undergoes both 'Lys-48'- and 'Lys-63'-linked polyubiquitination. TRAF6-induced 'Lys-63'-linked AKT2 ubiquitination. When fully phosphorylated and translocated into the nucleus, undergoes 'Lys-48'-polyubiquitination catalyzed by TTC3, leading to its degradation by the proteasome. O-GlcNAcylation at Thr-306 and Thr-313 inhibits activating phosphorylation at Thr-309 via disrupting the interaction between AKT and PDPK1/PDK1. As to expression, expressed in adipocytes and hepatocytes (at protein level). Expressed at low levels in skeletal muscle (at protein level).

It localises to the cytoplasm. The protein localises to the nucleus. It is found in the cell membrane. The protein resides in the early endosome. It carries out the reaction L-seryl-[protein] + ATP = O-phospho-L-seryl-[protein] + ADP + H(+). It catalyses the reaction L-threonyl-[protein] + ATP = O-phospho-L-threonyl-[protein] + ADP + H(+). With respect to regulation, phosphorylation at Thr-309 (in the kinase domain) and Ser-474 (in the C-terminal regulatory region) is required for full activation. In adipocytes and hepatocytes, the activation is induced by insulin. AKT2 phosphorylation of PKP1 is induced by insulin. Serine/threonine kinase closely related to AKT1 and AKT3. All 3 enzymes, AKT1, AKT2 and AKT3, are collectively known as AKT kinase. AKT regulates many processes including metabolism, proliferation, cell survival, growth and angiogenesis, through the phosphorylation of a range of downstream substrates. Over 100 substrates have been reported so far, although for most of them, the precise AKT kinase catalyzing the reaction was not specified. AKT regulates glucose uptake by mediating insulin-induced translocation of the SLC2A4/GLUT4 glucose transporter to the cell surface. Phosphorylation of PTPN1 at 'Ser-50' negatively modulates its phosphatase activity preventing dephosphorylation of the insulin receptor and the attenuation of insulin signaling. Phosphorylation of TBC1D4 triggers the binding of this effector to inhibitory 14-3-3 proteins, which is required for insulin-stimulated glucose transport. AKT also regulates the storage of glucose in the form of glycogen by phosphorylating GSK3A at 'Ser-21' and GSK3B at 'Ser-9', resulting in inhibition of its kinase activity. Phosphorylation of GSK3 isoforms by AKT is also thought to be one mechanism by which cell proliferation is driven. AKT also regulates cell survival via the phosphorylation of MAP3K5 (apoptosis signal-related kinase). Phosphorylation of 'Ser-83' decreases MAP3K5 kinase activity stimulated by oxidative stress and thereby prevents apoptosis. AKT mediates insulin-stimulated protein synthesis by phosphorylating TSC2 at 'Ser-939' and 'Thr-1462', thereby activating mTORC1 signaling and leading to both phosphorylation of 4E-BP1 and in activation of RPS6KB1. AKT is involved in the phosphorylation of members of the FOXO factors (Forkhead family of transcription factors), leading to binding of 14-3-3 proteins and cytoplasmic localization. In particular, FOXO1 is phosphorylated at 'Thr-24', 'Ser-256' and 'Ser-319'. FOXO3 and FOXO4 are phosphorylated on equivalent sites. AKT has an important role in the regulation of NF-kappa-B-dependent gene transcription and positively regulates the activity of CREB1 (cyclic AMP (cAMP)-response element binding protein). The phosphorylation of CREB1 induces the binding of accessory proteins that are necessary for the transcription of pro-survival genes such as BCL2 and MCL1. AKT phosphorylates 'Ser-454' on ATP citrate lyase (ACLY), thereby potentially regulating ACLY activity and fatty acid synthesis. Activates the 3B isoform of cyclic nucleotide phosphodiesterase (PDE3B) via phosphorylation of 'Ser-273', resulting in reduced cyclic AMP levels and inhibition of lipolysis. Phosphorylates PIKFYVE on 'Ser-318', which results in increased PI(3)P-5 activity. The Rho GTPase-activating protein DLC1 is another substrate and its phosphorylation is implicated in the regulation cell proliferation and cell growth. AKT plays a role as key modulator of the AKT-mTOR signaling pathway controlling the tempo of the process of newborn neurons integration during adult neurogenesis, including correct neuron positioning, dendritic development and synapse formation. Signals downstream of phosphatidylinositol 3-kinase (PI(3)K) to mediate the effects of various growth factors such as platelet-derived growth factor (PDGF), epidermal growth factor (EGF), insulin and insulin-like growth factor 1 (IGF1). AKT mediates the antiapoptotic effects of IGF1. Essential for the SPATA13-mediated regulation of cell migration and adhesion assembly and disassembly. May be involved in the regulation of the placental development. In response to lysophosphatidic acid stimulation, inhibits the ciliogenesis cascade. In this context, phosphorylates WDR44, hence stabilizing its interaction with Rab11 and preventing the formation of the ciliogenic Rab11-FIP3-RAB3IP complex. Also phosphorylates RAB3IP/Rabin8, thus may affect RAB3IP guanine nucleotide exchange factor (GEF) activity toward Rab8, which is important for cilia growth. Phosphorylates PKP1, facilitating its interaction with YWHAG and translocation to the nucleus, ultimately resulting in a reduction in keratinocyte intercellular adhesion. Phosphorylation of PKP1 increases PKP1 protein stability, translocation to the cytoplasm away from desmosome plaques and PKP1-driven cap-dependent translation. In terms of biological role, several AKT2-specific substrates have been identified, including ANKRD2, C2CD5, CLK2 and PITX2. May play a role in myoblast differentiation. In this context, may act through PITX2 phosphorylation. Unphosphorylated PITX2 associates with an ELAVL1/HuR-containing complex, which stabilizes cyclin mRNA and ensuring cell proliferation. Phosphorylation by AKT2 impairs this association, leading to CCND1 mRNA destabilization and progression towards differentiation. Also involved in the negative regulation of myogenesis in response to stress conditions. In this context, acts by phosphorylating ANKRD2. May also be a key regulator of glucose uptake. Regulates insulin-stimulated glucose transport by the increase of glucose transporter GLUT4 translocation from intracellular stores to the plasma membrane. In this context, acts by phosphorylating C2CD5/CDP138 on 'Ser-197' in insulin-stimulated adipocytes. Through the phosphorylation of CLK2 on 'Thr-343', involved in insulin-regulated suppression of hepatic gluconeogenesis. This is RAC-beta serine/threonine-protein kinase from Rattus norvegicus (Rat).